We begin with the raw amino-acid sequence, 55 residues long: Large ribosomal subunit protein bL33 (55 aa).

It belongs to the bacterial ribosomal protein bL33 family.

The sequence is that of Large ribosomal subunit protein bL33 from Hyphomonas neptunium (strain ATCC 15444).